Reading from the N-terminus, the 146-residue chain is Hemoglobin subunit beta (146 aa).

Residues 2–146 (FLTAEEKGLV…VANALAHKYH (145 aa)) enclose the Globin domain. Serine 44 carries the post-translational modification Phosphoserine. Lysine 59 carries the post-translational modification N6-acetyllysine. Residue histidine 63 participates in heme b binding. Lysine 82 bears the N6-acetyllysine mark. Histidine 92 is a binding site for heme b. Cysteine 93 carries the post-translational modification S-nitrosocysteine. Residue lysine 144 is modified to N6-acetyllysine.

This sequence belongs to the globin family. Heterotetramer of two alpha chains and two beta chains. In terms of tissue distribution, red blood cells.

Involved in oxygen transport from the lung to the various peripheral tissues. This Lynx lynx (Eurasian lynx) protein is Hemoglobin subunit beta (HBB).